The sequence spans 323 residues: Beta-ketoacyl-[acyl-carrier-protein] synthase III (323 aa).

Active-site residues include Cys114 and His250. The tract at residues 251–255 (QANLR) is ACP-binding. The active site involves Asn280.

It belongs to the thiolase-like superfamily. FabH family. As to quaternary structure, homodimer.

It localises to the cytoplasm. The enzyme catalyses malonyl-[ACP] + acetyl-CoA + H(+) = 3-oxobutanoyl-[ACP] + CO2 + CoA. The protein operates within lipid metabolism; fatty acid biosynthesis. In terms of biological role, catalyzes the condensation reaction of fatty acid synthesis by the addition to an acyl acceptor of two carbons from malonyl-ACP. Catalyzes the first condensation reaction which initiates fatty acid synthesis and may therefore play a role in governing the total rate of fatty acid production. Possesses both acetoacetyl-ACP synthase and acetyl transacylase activities. Its substrate specificity determines the biosynthesis of branched-chain and/or straight-chain of fatty acids. This is Beta-ketoacyl-[acyl-carrier-protein] synthase III from Cereibacter sphaeroides (strain ATCC 17029 / ATH 2.4.9) (Rhodobacter sphaeroides).